Reading from the N-terminus, the 289-residue chain is Elongation factor Ts (289 aa).

The involved in Mg(2+) ion dislocation from EF-Tu stretch occupies residues 82 to 85 (TDFV).

The protein belongs to the EF-Ts family.

It is found in the cytoplasm. Associates with the EF-Tu.GDP complex and induces the exchange of GDP to GTP. It remains bound to the aminoacyl-tRNA.EF-Tu.GTP complex up to the GTP hydrolysis stage on the ribosome. The sequence is that of Elongation factor Ts from Marinobacter nauticus (strain ATCC 700491 / DSM 11845 / VT8) (Marinobacter aquaeolei).